Here is a 96-residue protein sequence, read N- to C-terminus: Large ribosomal subunit protein eL21 (96 aa).

The protein belongs to the eukaryotic ribosomal protein eL21 family.

This chain is Large ribosomal subunit protein eL21, found in Methanoregula boonei (strain DSM 21154 / JCM 14090 / 6A8).